Here is a 365-residue protein sequence, read N- to C-terminus: 5-hydroxytryptamine receptor 1E (365 aa).

Residues 1-22 (MNITNCTTDASMVVRPKTVTEK) are Extracellular-facing. N-linked (GlcNAc...) asparagine glycans are attached at residues Asn-2 and Asn-5. A helical transmembrane segment spans residues 23–47 (MLICMTLVIITTLTMLLNSAVIMAI). Residues 48–59 (CTTKKLHQPANY) lie on the Cytoplasmic side of the membrane. A helical transmembrane segment spans residues 60-82 (LICSLAVTDLLVAVLVMPLSIMY). At 83-96 (IVMDSWRLGYFICE) the chain is on the extracellular side. Cys-95 and Cys-173 are oxidised to a cystine. Residues 97-118 (VWLSVDMTCCTCSILHLCVIAL) traverse the membrane as a helical segment. 2 residues coordinate ergotamine: Asp-102 and Thr-107. The short motif at 119-121 (DRY) is the DRY motif; important for ligand-induced conformation changes element. At 119–138 (DRYWAITNAIEYARKRTAKR) the chain is on the cytoplasmic side. The helical transmembrane segment at 139 to 160 (AGLMILTVWTISIFISMPPLFW) threads the bilayer. Over 161–179 (RSHRQLSPPPSQCTIQHDH) the chain is Extracellular. Ile-175 provides a ligand contact to ergotamine. Residues 180–202 (VIYTIYSTFGAFYIPLTLILILY) form a helical membrane-spanning segment. Residues 203–291 (YRIYHAAKSL…SSTRERKAAR (89 aa)) lie on the Cytoplasmic side of the membrane. Residues 292-314 (ILGLILGAFILSWLPFFIKELIV) form a helical membrane-spanning segment. Residues 315 to 324 (GLSIYTVSSE) lie on the Extracellular side of the membrane. A helical transmembrane segment spans residues 325 to 347 (VGDFLTWLGYVNSLINPLLYTSF). Residues 340–344 (NPLLY) carry the NPxxY motif; important for ligand-induced conformation changes and signaling motif. Residues 348–365 (NEDFKLAFKKLIRCREHT) are Cytoplasmic-facing.

This sequence belongs to the G-protein coupled receptor 1 family. In terms of tissue distribution, detected in the brain with the greatest abundance in the hippocampus, followed by the olfactory bulb. Lower levels are detected in the cortex, thalamus, pons, hypothalamus, midbrain, striatum, and cerebellum.

The protein localises to the cell membrane. G-protein coupled receptor for 5-hydroxytryptamine (serotonin). Also functions as a receptor for various alkaloids and psychoactive substances. Ligand binding causes a conformation change that triggers signaling via guanine nucleotide-binding proteins (G proteins) and modulates the activity of down-stream effectors, such as adenylate cyclase. Signaling inhibits adenylate cyclase activity. This Cavia porcellus (Guinea pig) protein is 5-hydroxytryptamine receptor 1E (5HT1E).